Here is a 177-residue protein sequence, read N- to C-terminus: CCHC-type zinc finger nucleic acid binding protein (177 aa).

Ser2 carries the post-translational modification N-acetylserine. The CCHC-type 1 zinc finger occupies 4 to 21 (NECFKCGRSGHWARECPT). Lys8 bears the N6-acetyllysine mark. An omega-N-methylarginine; by PRMT1 mark is found at Arg25 and Arg27. The tract at residues 25–38 (RGRGMRSRGRGGFT) is RNA-binding Arg/Gly-rich region (RGG-box). Arg32 and Arg34 each carry omega-N-methylarginine. Position 49 is a phosphoserine (Ser49). 6 CCHC-type zinc fingers span residues 52 to 69 (DICYRCGESGHLAKDCDL), 72 to 89 (DACYNCGRGGHIAKDCKE), 96 to 113 (QCCYNCGKPGHLARDCDH), 117 to 134 (QKCYSCGEFGHIQKDCTK), 135 to 152 (VKCYRCGETGHVAINCSK), and 156 to 173 (VNCYRCGESGHLARECTI). An omega-N-methylarginine mark is found at Ala73, Arg79, and Gly80.

Associates with the 40S ribosomal subunit, the 80S ribosome and with polysomes. Arginine methylation by PRMT1 in the Arg/Gly-rich region impedes RNA binding. In terms of tissue distribution, expressed in the liver, kidney, spleen, testis, lung, muscle and adrenal glands.

The protein localises to the nucleus. It localises to the cytoplasm. It is found in the endoplasmic reticulum. Single-stranded DNA-binding protein that preferentially binds to the sterol regulatory element (SRE) sequence 5'-GTGCGGTG-3', and thereby mediates transcriptional repression. Has a role as transactivator of the Myc promoter. Binds single-stranded RNA in a sequence-specific manner. Its function is as follows. Binds G-rich elements in target mRNA coding sequences. Prevents G-quadruplex structure formation in vitro, suggesting a role in supporting translation by resolving stable structures on mRNAs. Functionally, binds to RNA. This chain is CCHC-type zinc finger nucleic acid binding protein, found in Homo sapiens (Human).